The primary structure comprises 75 residues: UPF0181 protein ETA_15280 (75 aa).

This sequence belongs to the UPF0181 family.

This chain is UPF0181 protein ETA_15280, found in Erwinia tasmaniensis (strain DSM 17950 / CFBP 7177 / CIP 109463 / NCPPB 4357 / Et1/99).